The primary structure comprises 82 residues: DNA-directed RNA polymerase subunit Rpo5 (82 aa).

The protein belongs to the archaeal Rpo5/eukaryotic RPB5 RNA polymerase subunit family. Part of the RNA polymerase complex.

It is found in the cytoplasm. The enzyme catalyses RNA(n) + a ribonucleoside 5'-triphosphate = RNA(n+1) + diphosphate. DNA-dependent RNA polymerase (RNAP) catalyzes the transcription of DNA into RNA using the four ribonucleoside triphosphates as substrates. This Thermococcus celer protein is DNA-directed RNA polymerase subunit Rpo5.